We begin with the raw amino-acid sequence, 298 residues long: Ankyrin repeat domain-containing protein 29 (298 aa).

ANK repeat units follow at residues 8-38 (PLAN…DVDC), 42-71 (YGTT…DINL), 75-104 (TGST…STEF), 108-137 (DGGT…NVHD), 141-170 (DGAT…KVNQ), 174-203 (DGTA…DRDA), 207-236 (DGST…SLGI), and 239-268 (NGST…DPAL).

The chain is Ankyrin repeat domain-containing protein 29 (ankrd29) from Danio rerio (Zebrafish).